A 202-amino-acid polypeptide reads, in one-letter code: Dephospho-CoA kinase (202 aa).

The region spanning 6–202 (KVSITGDLSS…EYFYALKGAL (197 aa)) is the DPCK domain. Residue 14-19 (SSGKTE) participates in ATP binding.

This sequence belongs to the CoaE family.

It localises to the cytoplasm. It catalyses the reaction 3'-dephospho-CoA + ATP = ADP + CoA + H(+). Its pathway is cofactor biosynthesis; coenzyme A biosynthesis; CoA from (R)-pantothenate: step 5/5. In terms of biological role, catalyzes the phosphorylation of the 3'-hydroxyl group of dephosphocoenzyme A to form coenzyme A. The protein is Dephospho-CoA kinase of Chlamydia caviae (strain ATCC VR-813 / DSM 19441 / 03DC25 / GPIC) (Chlamydophila caviae).